Reading from the N-terminus, the 344-residue chain is Anthranilate phosphoribosyltransferase (344 aa).

5-phospho-alpha-D-ribose 1-diphosphate contacts are provided by residues G80, 83-84, T88, 90-93, 108-116, and S120; these read GD, NVST, and KHGNRSVSS. G80 contacts anthranilate. Position 92 (S92) interacts with Mg(2+). An anthranilate-binding site is contributed by N111. R166 provides a ligand contact to anthranilate. Residues D225 and E226 each coordinate Mg(2+).

Belongs to the anthranilate phosphoribosyltransferase family. Homodimer. It depends on Mg(2+) as a cofactor.

The enzyme catalyses N-(5-phospho-beta-D-ribosyl)anthranilate + diphosphate = 5-phospho-alpha-D-ribose 1-diphosphate + anthranilate. The protein operates within amino-acid biosynthesis; L-tryptophan biosynthesis; L-tryptophan from chorismate: step 2/5. Functionally, catalyzes the transfer of the phosphoribosyl group of 5-phosphorylribose-1-pyrophosphate (PRPP) to anthranilate to yield N-(5'-phosphoribosyl)-anthranilate (PRA). The sequence is that of Anthranilate phosphoribosyltransferase from Legionella pneumophila (strain Lens).